We begin with the raw amino-acid sequence, 70 residues long: MLINLYRYCISPFIPARCRYYPTCSEYALEALKTHGILKGLYLTTRRLLRCHPLSKRDYYDLVPCKNKKG.

Belongs to the UPF0161 family.

The protein resides in the cell inner membrane. Its function is as follows. Could be involved in insertion of integral membrane proteins into the membrane. This is Putative membrane protein insertion efficiency factor from Francisella tularensis subsp. tularensis (strain SCHU S4 / Schu 4).